Here is a 31-residue protein sequence, read N- to C-terminus: Cyclotide vico-A (31 aa).

Residues 1–31 constitute a cross-link (cyclopeptide (Gly-Asn)); it reads GSIPCAESCVYIPCFTGIAGCSCKNKVCYYN. Intrachain disulfides connect C5–C21, C9–C23, and C14–C28.

Belongs to the cyclotide family. Bracelet subfamily. Post-translationally, this is a cyclic peptide.

Its function is as follows. Probably participates in a plant defense mechanism. This chain is Cyclotide vico-A, found in Viola cotyledon (Violeta).